Reading from the N-terminus, the 601-residue chain is DDB1- and CUL4-associated factor 8 (601 aa).

Composition is skewed to polar residues over residues 1–24 (MSFSGEMSNGKTDVTNGGFSSSPE) and 46–60 (VSLSLTADETGTTQA). The interval 1-150 (MSFSGEMSNG…DWLISEKTPL (150 aa)) is disordered. The Nuclear export signal motif lies at 39-50 (IEVEASDVSLSL). The segment covering 61-99 (ESRDSCSETSGEDKDSDSMDDTGHYSINDENRGNDQSHS) has biased composition (basic and acidic residues). The stretch at 94–131 (NDQSHSEDEEEEEEEDEEEEAVRHRKRAQRKRANRDQE) forms a coiled coil. The span at 100-113 (EDEEEEEEEDEEEE) shows a compositional bias: acidic residues. Residues 116-126 (RHRKRAQRKRA) are compositionally biased toward basic residues. Over residues 127–140 (NRDQESSDEERALD) the composition is skewed to basic and acidic residues. WD repeat units lie at residues 194–233 (GHSGCVNTLHFNQRGTCLASGSDDLKVVVWDWVRRKPVLE), 237–278 (GHKS…CCKN), 284–324 (QHKG…PASR), 332–372 (ESKV…ENVN), 388–427 (EAKANITCLVYSHDGSELLASYNDEDIYLFNSSHSDGAEY), 435–475 (RNNA…IVQF), and 479–519 (DKGG…TELD). The tract at residues 561-601 (RRRRRDAGLGAGDAESDDSPSSSDSSDDDEDGPDRVQCIPS) is disordered.

The protein belongs to the WD repeat DCAF8 family.

It localises to the nucleus. The protein resides in the cytoplasm. In Xenopus laevis (African clawed frog), this protein is DDB1- and CUL4-associated factor 8 (dcaf8).